The chain runs to 296 residues: MIYLHAIDPIAFSLGPVQVHWYGLMYLAAFFSAWALGRSRILRGRLPGVDMDGFSDLLFYGMLGVVLGGRIGYMLFYAFETFLANPLILFKVWEGGMSFHGGLLGVLIACWLWARKHRLHFFDVMDFVAPLVPLGLGFGRLGNFVGGELWGKFTQAGWGVIFPHAPELADRLPAQIQAQYAAGALNQFARHPSQLYEAALEGVVMFVVLWTFSMKPRARYAVSGLFALLYGVFRFIVEFVRVPDAPIGYLAFNWLTMGQILSLPLIAVGLVLLAMSRRAPVLQPVLPAPAGVEAAK.

The next 4 membrane-spanning stretches (helical) occupy residues 10-30 (IAFSLGPVQVHWYGLMYLAAF), 57-77 (LLFYGMLGVVLGGRIGYMLFY), 92-112 (VWEGGMSFHGGLLGVLIACWL), and 119-139 (LHFFDVMDFVAPLVPLGLGFG). An a 1,2-diacyl-sn-glycero-3-phospho-(1'-sn-glycerol)-binding site is contributed by R140. 3 helical membrane passes run 194-214 (QLYEAALEGVVMFVVLWTFSM), 220-240 (YAVSGLFALLYGVFRFIVEFV), and 254-274 (WLTMGQILSLPLIAVGLVLLA).

This sequence belongs to the Lgt family.

The protein resides in the cell inner membrane. It catalyses the reaction L-cysteinyl-[prolipoprotein] + a 1,2-diacyl-sn-glycero-3-phospho-(1'-sn-glycerol) = an S-1,2-diacyl-sn-glyceryl-L-cysteinyl-[prolipoprotein] + sn-glycerol 1-phosphate + H(+). It functions in the pathway protein modification; lipoprotein biosynthesis (diacylglyceryl transfer). Catalyzes the transfer of the diacylglyceryl group from phosphatidylglycerol to the sulfhydryl group of the N-terminal cysteine of a prolipoprotein, the first step in the formation of mature lipoproteins. This is Phosphatidylglycerol--prolipoprotein diacylglyceryl transferase from Xanthomonas euvesicatoria pv. vesicatoria (strain 85-10) (Xanthomonas campestris pv. vesicatoria).